The primary structure comprises 353 residues: Quinolinate synthase (353 aa).

2 residues coordinate iminosuccinate: His47 and Ser68. Cys113 contributes to the [4Fe-4S] cluster binding site. Iminosuccinate is bound by residues 139–141 and Ser156; that span reads YAN. Cys200 is a [4Fe-4S] cluster binding site. Residues 226 to 228 and Thr243 each bind iminosuccinate; that span reads HPE. Cys297 contacts [4Fe-4S] cluster.

This sequence belongs to the quinolinate synthase family. Type 1 subfamily. [4Fe-4S] cluster is required as a cofactor.

The protein localises to the cytoplasm. The catalysed reaction is iminosuccinate + dihydroxyacetone phosphate = quinolinate + phosphate + 2 H2O + H(+). It participates in cofactor biosynthesis; NAD(+) biosynthesis; quinolinate from iminoaspartate: step 1/1. Catalyzes the condensation of iminoaspartate with dihydroxyacetone phosphate to form quinolinate. The protein is Quinolinate synthase of Yersinia pestis bv. Antiqua (strain Nepal516).